Here is a 780-residue protein sequence, read N- to C-terminus: Protein AMEIOTIC 1 (780 aa).

2 disordered regions span residues 32-60 (KKKT…SPLS) and 237-327 (APKE…RWSA). The segment covering 50 to 60 (DSTIQPRSPLS) has biased composition (polar residues). Composition is skewed to basic and acidic residues over residues 263-291 (EVKR…EGKK) and 309-327 (RTVE…RWSA). Positions 448 to 547 (VEELTEEVNG…LEEQVTYLSS (100 aa)) form a coiled coil.

The protein localises to the nucleus. Its subcellular location is the chromosome. Functionally, plays a fundamental role in building the proper chromosome structure at the beginning of meiosis in male meiocytes. Required for the transition from leptotene to zygotene in meiocytes. Required for homologous chromosome pairing, and initiation and progression of meiotic recombination. Regulates meiocyte cytoskeleton organization. This chain is Protein AMEIOTIC 1, found in Zea mays (Maize).